The primary structure comprises 789 residues: MSLQLSNSLFFARKESHFRCFSHVSASLDTGVRRVTSAKIASTCFEETKERIADLIHKAELSVSTYDTAWVAMVPSPNSSQEPCFPDCLSWLLQNQCCDGSWACPHHHPLLKKDVLCSTLACVLALKKWGVGEEKINRGVHFIEHNFASAMEKCQISPMGFDIIFPAMLDYARDLLLNLRLEPTMLNDLIYKRGLELKRNQNHSAEREAYLAYVAEGMGKLQDLGSVMKHQRRNGSLFNSPSTTAAAFIAFPNSRCLTYLRSALKKFGSAVPAVYPLDIYLQLCTVDNLERLGISRYFQKEIQGVLDETYRCWLQGNEEIFMDAPTCALAFRVLRKNGYNVTSDPITKLLEECFSSSFCGNIKDINTTLGLYRASEFILYPDERDLEKQNLMLKNLLEQELSSDFIHSSQLGRNIDAEVKHALEYPFYADLDRIVNRRNIEHYNFDNTRILKTSYCSPNFGNKDFLFLSVKDYNECQAIHREELRELERWVIENRLDELRFARQKCAYCYFSAAATLFAPELSNARMSWAKNGVLTTVVDDFFDLGGSVEELKNLIQLVELWDVDVSTECSSQNVQIIFSALKCTICDIGDKGSKLQERSITNHIIDIWLDLLYSMMKETEWARDKYIPTMDEYISNAYVSFALGPIVLPALYLVGPKLSEEMVHHSEYHNLYKLMSTCGRLLNDIRGCERELKEGKLNAIPLYIINNGGEITKEAAASEMKSLIETHRRELLRLVLEGKNSVLPKSCKELFWHMSKVLHLFYSKDDGFTSQDLIKVVKAVIYEPIVLK.

Mg(2+) contacts are provided by D540 and D544. Positions D540–D544 match the DDXXD motif motif. The helical transmembrane segment at A638–G656 threads the bilayer. 3 residues coordinate Mg(2+): N684, R687, and E692.

Belongs to the terpene synthase family. The cofactor is Mg(2+). In terms of tissue distribution, expressed in leaves and fruits, including trichomes.

Its subcellular location is the plastid. It is found in the chloroplast membrane. It catalyses the reaction ent-copalyl diphosphate = ent-kaur-16-ene + diphosphate. Its pathway is plant hormone biosynthesis; gibberellin biosynthesis. Involved in the biosynthesis of labdane-type diterpenoid including cleroda-dienols, and peregrinol lactones and furan derivatives, dopaminergic diterpenoids that can bind to dopamine receptors in the human pituitary gland, have probably ability to lower prolactin levels, and are used to treat menstrual cycle disorders (e.g. premenstrual syndrome and mastodynia). Terpene synthase that produces ent-kaurene from ent-copalyl diphosphate. This is Ent-kaurene synthase TSP4, chloroplastic from Vitex agnus-castus (Chaste tree).